The primary structure comprises 175 residues: MTRAPLNVLLRRVDPDVPLPAYEHPGDAGADLRTTESCELKPGERAVLPTGVSVALPEGYAAFVHPRSGLAARCGVALVNAPGTVDAGYRGEIKVIVVNLDPRESVRFERFDRIAQLVVQQVERVRFQEVAELPDSARAEGGFGSTGGHAAVGADTNGQQGGNRYASVVSDRKGQ.

Substrate is bound by residues R67–G69, N80, T84–D86, and K94. The interval R138–Q175 is disordered.

Belongs to the dUTPase family. Requires Mg(2+) as cofactor.

The catalysed reaction is dUTP + H2O = dUMP + diphosphate + H(+). It functions in the pathway pyrimidine metabolism; dUMP biosynthesis; dUMP from dCTP (dUTP route): step 2/2. This enzyme is involved in nucleotide metabolism: it produces dUMP, the immediate precursor of thymidine nucleotides and it decreases the intracellular concentration of dUTP so that uracil cannot be incorporated into DNA. This chain is Deoxyuridine 5'-triphosphate nucleotidohydrolase, found in Streptomyces avermitilis (strain ATCC 31267 / DSM 46492 / JCM 5070 / NBRC 14893 / NCIMB 12804 / NRRL 8165 / MA-4680).